The sequence spans 420 residues: L-rhamnose isomerase (420 aa).

3 residues coordinate Mn(2+): His262, Asp294, and Asp296.

The protein belongs to the rhamnose isomerase family. Homotetramer. Mn(2+) serves as cofactor.

The protein resides in the cytoplasm. It catalyses the reaction L-rhamnopyranose = L-rhamnulose. It functions in the pathway carbohydrate degradation; L-rhamnose degradation; glycerone phosphate from L-rhamnose: step 1/3. Functionally, catalyzes the interconversion of L-rhamnose and L-rhamnulose. This Pectobacterium atrosepticum (strain SCRI 1043 / ATCC BAA-672) (Erwinia carotovora subsp. atroseptica) protein is L-rhamnose isomerase.